The primary structure comprises 113 residues: Iron-sulfur cluster insertion protein ErpA (113 aa).

Iron-sulfur cluster-binding residues include cysteine 41, cysteine 105, and cysteine 107.

This sequence belongs to the HesB/IscA family. In terms of assembly, homodimer. Requires iron-sulfur cluster as cofactor.

Functionally, required for insertion of 4Fe-4S clusters for at least IspG. In Photobacterium profundum (strain SS9), this protein is Iron-sulfur cluster insertion protein ErpA.